A 191-amino-acid chain; its full sequence is Ribosome maturation factor RimM (191 aa).

In terms of domain architecture, PRC barrel spans 102 to 185 (EEEYHVSQLI…RIEINPPKGL (84 aa)).

The protein belongs to the RimM family. As to quaternary structure, binds ribosomal protein uS19.

The protein resides in the cytoplasm. In terms of biological role, an accessory protein needed during the final step in the assembly of 30S ribosomal subunit, possibly for assembly of the head region. Essential for efficient processing of 16S rRNA. May be needed both before and after RbfA during the maturation of 16S rRNA. It has affinity for free ribosomal 30S subunits but not for 70S ribosomes. The polypeptide is Ribosome maturation factor RimM (Crocosphaera subtropica (strain ATCC 51142 / BH68) (Cyanothece sp. (strain ATCC 51142))).